A 1255-amino-acid polypeptide reads, in one-letter code: TBC1 domain family member 1 (1255 aa).

S146 carries the post-translational modification Phosphoserine. The segment at 208–228 (RTDWEAPTGQPSAPGPRPMRK) is disordered. S229 is subject to Phosphoserine; by PKB/AKT1. Phosphoserine; by AMPK is present on S231. The region spanning 238–398 (LAFRKEFQDA…LHKLCERIEG (161 aa)) is the PID domain. S489 is subject to Phosphoserine; by PKB/AKT1. S497 carries the post-translational modification Phosphoserine. T499 carries the post-translational modification Phosphothreonine; by PKB/AKT1. A phosphoserine mark is found at S501, S519, S521, S559, S560, S564, S565, and S579. Disordered regions lie at residues 509–544 (GNKA…MGDK) and 559–581 (SSDD…LSPQ). Over residues 519-539 (SASVDLDSSTSSTLSNTSKEL) the composition is skewed to low complexity. Phosphothreonine is present on T590. Disordered regions lie at residues 595 to 614 (PVEC…VSQR) and 621 to 681 (SVST…GNAV). Phosphoserine is present on S608. S621 is modified (phosphoserine; by PKB/AKT1). S660 and S661 each carry phosphoserine. Residues 670-679 (HNSSGEQSGN) are compositionally biased toward polar residues. S697 is subject to Phosphoserine; by PKB/AKT1. A phosphoserine mark is found at S698 and S699. The residue at position 700 (S700) is a Phosphoserine; by AMPK. The interval 764-786 (DSPSRYEDYSELGELPPRSPLEP) is disordered. Phosphoserine occurs at positions 782 and 1028. The 195-residue stretch at 887–1081 (GVPRHHRGEI…RVFDMIFLQG (195 aa)) folds into the Rab-GAP TBC domain. At Y1039 the chain carries Phosphotyrosine. At T1218 the chain carries Phosphothreonine. The segment at 1233-1255 (LRRQSARPSTPEPDCTQLEPTGD) is disordered.

In terms of assembly, interacts with APPL2 (via BAR domain); interaction is dependent of TBC1D1 phosphorylation at Ser-229; interaction diminishes the phosphorylation of TBC1D1 at Thr-590, resulting in inhibition of SLC2A4/GLUT4 translocation and glucose uptake. In terms of processing, insulin-stimulated phosphorylation by AKT family kinases stimulates SLC2A4/GLUT4 translocation. Expressed in highest levels in hematopoietic cells, testis and kidney.

Its subcellular location is the nucleus. Its function is as follows. May act as a GTPase-activating protein for Rab family protein(s). May play a role in the cell cycle and differentiation of various tissues. Involved in the trafficking and translocation of GLUT4-containing vesicles and insulin-stimulated glucose uptake into cells. The protein is TBC1 domain family member 1 (Tbc1d1) of Mus musculus (Mouse).